Here is a 408-residue protein sequence, read N- to C-terminus: Serine/threonine transporter SstT (408 aa).

Transmembrane regions (helical) follow at residues 11 to 31, 43 to 63, 82 to 102, 141 to 161, 192 to 212, 216 to 236, 298 to 318, 339 to 359, and 363 to 383; these read LANGSLVLQILVGIIAGVSLA, FLGSLFVGALKAIAPILVFIL, IVVLYLFGTFAAALTAVLLSM, ALMTGNYIGILAWGVGLGLAL, IGIFGLVAATFAETGFAAIAG, LLAVLLGAMAIIALIVNPLIV, MGGAAITITVLTLAAAHTLGI, ASGVAGGSLLLIPLACSLFGI, and VAMQVVAVGFIIGVIQDAAET.

The protein belongs to the dicarboxylate/amino acid:cation symporter (DAACS) (TC 2.A.23) family.

Its subcellular location is the cell inner membrane. It carries out the reaction L-serine(in) + Na(+)(in) = L-serine(out) + Na(+)(out). The catalysed reaction is L-threonine(in) + Na(+)(in) = L-threonine(out) + Na(+)(out). Functionally, involved in the import of serine and threonine into the cell, with the concomitant import of sodium (symport system). This chain is Serine/threonine transporter SstT, found in Shewanella sp. (strain MR-7).